Reading from the N-terminus, the 185-residue chain is Transcription termination/antitermination protein NusG (185 aa).

The region spanning 134-162 (PGQMVRVIDGPFNDFDGLVEEVNYEKNRL) is the KOW domain.

The protein belongs to the NusG family.

Participates in transcription elongation, termination and antitermination. This Xylella fastidiosa (strain 9a5c) protein is Transcription termination/antitermination protein NusG.